The following is a 137-amino-acid chain: Phosphomevalonate dehydratase small subunit (137 aa).

S65 (proton acceptor) is an active-site residue.

It belongs to the AcnX type II small subunit family. In terms of assembly, heterodimer composed of a large subunit (PMDh-L) and a small subunit (PMDh-S).

It carries out the reaction (R)-5-phosphomevalonate = (2E)-3-methyl-5-phosphooxypent-2-enoate + H2O. The protein operates within isoprenoid biosynthesis; isopentenyl diphosphate biosynthesis via mevalonate pathway. Component of a hydro-lyase that catalyzes the dehydration of mevalonate 5-phosphate (MVA5P) to form trans-anhydromevalonate 5-phosphate (tAHMP). Involved in the archaeal mevalonate (MVA) pathway, which provides fundamental precursors for isoprenoid biosynthesis, such as isopentenyl diphosphate (IPP) and dimethylallyl diphosphate (DMAPP). The protein is Phosphomevalonate dehydratase small subunit of Methanococcoides burtonii (strain DSM 6242 / NBRC 107633 / OCM 468 / ACE-M).